Here is a 294-residue protein sequence, read N- to C-terminus: Golgi to ER traffic protein 2 (294 aa).

A disordered region spans residues 1-104 (MSSELSETEK…QATSPQETID (104 aa)). Topologically, residues 1-166 (MSSELSETEK…LDYNNYLINN (166 aa)) are cytoplasmic. Basic residues predominate over residues 12 to 21 (KLIRERRQKK). A compositionally biased stretch (polar residues) spans 34 to 65 (ITGQAENSQLDTESPLDSKSSRETTPTVTKVD). Residues 85 to 95 (KVEKSQKKKEQ) are compositionally biased toward basic and acidic residues. The chain crosses the membrane as a helical span at residues 167–187 (LKVWSIIFKWCFFLIPYLFAL). The Lumenal portion of the chain corresponds to 188-205 (TRSEPISFLPEQFSNPSN). A helical membrane pass occupies residues 206-225 (FFMIFLSFEIVATSIYFQKL). Residues 226–272 (QNIEKSNKINGFQSNNKIVNLVSLIPEGVLPVPDIKGKVIMALQYWD) lie on the Cytoplasmic side of the membrane. A helical transmembrane segment spans residues 273-293 (VFSMFLTDICFVLVMMGLFKL). Ile-294 is a topological domain (lumenal).

This sequence belongs to the GET2 family. In terms of assembly, component of the Golgi to ER traffic (GET) complex, which is composed of GET1, GET2 and GET3. Within the complex, GET1 and GET2 form a heterotetramer which is stabilized by phosphatidylinositol binding and which binds to the GET3 homodimer.

It localises to the endoplasmic reticulum membrane. The protein resides in the golgi apparatus membrane. Its function is as follows. Required for the post-translational delivery of tail-anchored (TA) proteins to the endoplasmic reticulum. Together with GET1, acts as a membrane receptor for soluble GET3, which recognizes and selectively binds the transmembrane domain of TA proteins in the cytosol. The GET complex cooperates with the HDEL receptor ERD2 to mediate the ATP-dependent retrieval of resident ER proteins that contain a C-terminal H-D-E-L retention signal from the Golgi to the ER. This is Golgi to ER traffic protein 2 from Vanderwaltozyma polyspora (strain ATCC 22028 / DSM 70294 / BCRC 21397 / CBS 2163 / NBRC 10782 / NRRL Y-8283 / UCD 57-17) (Kluyveromyces polysporus).